The primary structure comprises 346 residues: N-acetyl-gamma-glutamyl-phosphate reductase (346 aa).

Residue Cys-149 is part of the active site.

Belongs to the NAGSA dehydrogenase family. Type 1 subfamily.

It localises to the cytoplasm. It catalyses the reaction N-acetyl-L-glutamate 5-semialdehyde + phosphate + NADP(+) = N-acetyl-L-glutamyl 5-phosphate + NADPH + H(+). The protein operates within amino-acid biosynthesis; L-arginine biosynthesis; N(2)-acetyl-L-ornithine from L-glutamate: step 3/4. In terms of biological role, catalyzes the NADPH-dependent reduction of N-acetyl-5-glutamyl phosphate to yield N-acetyl-L-glutamate 5-semialdehyde. The polypeptide is N-acetyl-gamma-glutamyl-phosphate reductase (Geobacter sp. (strain M21)).